The chain runs to 548 residues: MSHILRAAVLAAMLLPLPSMADQAGKSPNAVRYHGGDEIILQGFHWNVVREAPNDWYNILRQQAATIAADGFSAIWMPVPWRDFSSWSDGSKSGGGEGYFWHDFNKNGRYGSDAQLRQAASALGGAGVKVLYDVVPNHMNRGYPDKEINLPAGQGFWRNDCADPGNYPNDCDDGDRFIGGDADLNTGHPQVYGMFRDEFTNLRSQYGAGGFRFDFVRGYAPERVNSWMTDSADNSFCVGELWKGPSEYPNWDWRNTASWQQIIKDWSDRAKCPVFDFALKERMQNGSIADWKHGLNGNPDPRWREVAVTFVDNHDTGYSPGQNGGQHHWALQDGLIRQAYAYILTSPGTPVVYWSHMYDWGYGDFIRQLIQVRRAAGVRADSAISFHSGYSGLVATVSGSQQTLVVALNSDLGNPGQVASGSFSEAVNASNGQVRVWRSGTGSGGGEPGALVSVSFRCDNGATQMGDSVYAVGNVSQLGNWSPAAALRLTDTSGYPTWKGSIALPAGQNEEWKCLIRNEANATQVRQWQGGANNSLTPSEGATTVGRL.

Residues 1-21 form the signal peptide; that stretch reads MSHILRAAVLAAMLLPLPSMA. Ca(2+)-binding residues include D22, Q23, H34, D37, and E38. Position 99–100 (99–100) interacts with substrate; that stretch reads YF. N137 serves as a coordination point for Ca(2+). H138 is a substrate binding site. A disulfide bond links C161 and C171. Ca(2+)-binding residues include D172 and D175. 177–181 lines the substrate pocket; that stretch reads FIGGD. D183 is a binding site for Ca(2+). Residue R212 participates in substrate binding. Residue D214 is the Nucleophile of the active site. Residue 217 to 218 participates in substrate binding; the sequence is RG. G218 serves as a coordination point for Ca(2+). C237 and C272 are joined by a disulfide. The active-site Proton donor is the E240. Substrate contacts are provided by H314 and Q326. Residues 446 to 548 enclose the CBM20 domain; the sequence is GEPGALVSVS…SEGATTVGRL (103 aa). The span at 529 to 542 shows a compositional bias: polar residues; that stretch reads QGGANNSLTPSEGA. The tract at residues 529-548 is disordered; sequence QGGANNSLTPSEGATTVGRL.

This sequence belongs to the glycosyl hydrolase 13 family. In terms of assembly, monomer. It depends on Ca(2+) as a cofactor.

The protein resides in the secreted. The catalysed reaction is Hydrolysis of (1-&gt;4)-alpha-D-glucosidic linkages in amylaceous polysaccharides, to remove successive maltotetraose residues from the non-reducing chain ends.. Its pathway is glycan degradation; starch degradation. The chain is Glucan 1,4-alpha-maltotetraohydrolase (amyP) from Stutzerimonas stutzeri (Pseudomonas stutzeri).